Here is a 181-residue protein sequence, read N- to C-terminus: MMRLKEKYNQSIKPALVKEFDIKNPMLIPVIEKVVISVGAGELAKDQKVLQNVADTISLIAGQKAVITKAKKSVAGFKVREGFPVGVMVTLRKENMYAFLDKLISIALPRVKDFRGLSRDGFDGRGNYNFGLDEQLMFPEVEYDKILRTHGMNISIVTTAQNDKQAQKLLELIGVPFTKGK.

It belongs to the universal ribosomal protein uL5 family. In terms of assembly, part of the 50S ribosomal subunit; part of the 5S rRNA/L5/L18/L25 subcomplex. Contacts the 5S rRNA and the P site tRNA. Forms a bridge to the 30S subunit in the 70S ribosome.

Its function is as follows. This is one of the proteins that bind and probably mediate the attachment of the 5S RNA into the large ribosomal subunit, where it forms part of the central protuberance. In the 70S ribosome it contacts protein S13 of the 30S subunit (bridge B1b), connecting the 2 subunits; this bridge is implicated in subunit movement. Contacts the P site tRNA; the 5S rRNA and some of its associated proteins might help stabilize positioning of ribosome-bound tRNAs. This is Large ribosomal subunit protein uL5 from Campylobacter jejuni subsp. jejuni serotype O:6 (strain 81116 / NCTC 11828).